Here is a 483-residue protein sequence, read N- to C-terminus: Protein DETOXIFICATION 6 (483 aa).

The next 12 helical transmembrane spans lie at 38–58, 69–89, 113–133, 146–166, 187–207, 211–231, 263–283, 292–312, 334–354, 376–396, 405–425, and 436–456; these read ALPMATVTVAQYLLPVISVMV, GVALATSFTNVSGFSVMFGLA, FSAIVSNVPIVVLISILWFYM, ISKVAGSYAVCLIPALLAQAV, AITTLLFHIPVCLILVYAFGL, GAALAIGLSYWFNVLILALYV, AAMTTIEWSLFEFLILSSGLL, VLSICLTTSSLHYVIPMGIGA, VFAGIFLWFLEATICSTLLFI, LSPLLCISFLVDGFSAVLGGV, IGAWANVVAYYLLGAPVGLFL, and LWIGVVVGSTAQGIILAIVTA.

Belongs to the multi antimicrobial extrusion (MATE) (TC 2.A.66.1) family.

It localises to the membrane. In Arabidopsis thaliana (Mouse-ear cress), this protein is Protein DETOXIFICATION 6.